Here is a 257-residue protein sequence, read N- to C-terminus: Short-chain dehydrogenase reductase 3a (257 aa).

12–36 lines the NAD(+) pocket; sequence IITGGASGIGAEAVRLFTDHGAKVV. Residue Ser-144 participates in substrate binding. Catalysis depends on Tyr-157, which acts as the Proton acceptor.

It belongs to the short-chain dehydrogenases/reductases (SDR) family. Highly expressed in the radicle tip, lateral root primordia and tips, and the area surrounding the cotyledon hydathode of young seedlings.

In terms of biological role, confers resistance to the incompatible pathogenic bacteria P.syringae pv. tomato DC3000 in a PR1-dependent manner. Seems not involved in abscisic acid (ABA) biosynthesis. The polypeptide is Short-chain dehydrogenase reductase 3a (SDR3a) (Arabidopsis thaliana (Mouse-ear cress)).